Here is a 129-residue protein sequence, read N- to C-terminus: Prefoldin subunit 6 (129 aa).

Coiled-coil stretches lie at residues 6–26 and 84–118; these read VRDL…IQKD and IEYI…LQQR.

The protein belongs to the prefoldin subunit beta family. As to quaternary structure, heterohexamer of two PFD-alpha type and four PFD-beta type subunits forming prefoldin co-chaperone complex. Interacts with PFD2, PFD3, PFD4 and PFD5. Interacts with LSM8, a specific subunit of the LSM2-8 complex, which is a core component of the spliceosome. Binds to HSP90 to facilitate the formation of a larger complex made at least of HSP90, PFD6 and LSM8.

The protein localises to the cytoplasm. The protein resides in the nucleus. Functionally, binds specifically to cytosolic chaperonin (c-CPN) and transfers target proteins to it. Binds to nascent polypeptide chain and promotes folding in an environment in which there are many competing pathways for nonnative proteins. Together with other chaperonins, contribute to the regulation of gene expression by modulating the spliceosome function on pre-mRNA splicing post-transcriptionally by acting as a co-chaperone of Hsp90 to control levels of LSM8. Required for the biogenesis of tubulins and for subsequent microtubules (MTs) organization and dynamicity, but unable to associate with microtubules. Involved in the process leading to microtubules dissociation in response to gibberellic acid (GA) probably due to the DELLA proteins-mediated translocation of the prefoldin co-chaperone complex from the cytoplasm to the nucleus. Contributes to the GA-dependent regulation of PIN2 trafficking at the plasma membrane, thus influencing auxin flux. In Arabidopsis thaliana (Mouse-ear cress), this protein is Prefoldin subunit 6.